A 1893-amino-acid chain; its full sequence is MAGLQLMTPASSPMGPFFGLPWQQEAIHDNIYTPRKYQVELLEAALDHNTIVCLNSGSGKTFIAVLLSKELSYQIRGDFSKNTKRTVFLVNSEKQVSQQVSAVRTHTDLKVGEYSDQEKTQCWAKERWYLEFETHQVLVMTCHIFLNVLKSGNVSLSNINLLVFDECHLAIQDHPYREIMKICESCQPCPRILGLTASILNGKCDPRDLEEKIQKLEEILRSNAETATDLVVLDRYASQPCEIVLDCGPYIDKSGLYQRLLNELDEALNFLIDCNISTHSKERDSTLISKQILSDCQTVLLVLGPWCADKVAGMMVRELQKYIKHEQEELHRKFLLFTDTILRKIHALCEEHFSPASLDMKFVTPKVIKLLEILRKYKPYERQQFESVEWYNNRNQDNYVSWSDSEDDDDEDEEIEEKEKTETSFPSPFTNILCGIIFVERRYTAVVLNRLIKEAGKQDPELAYISSNFITGHGIGKNQPRNKQMEVEFRKQEEVLRKFRAHETNLLIATSIVEEGVDIPKCNLVVRFDLPSEYRSYVQSKGRARAPISNYIMLADSDKIKAFEEDLKTYKAIEKILRNKCSKSIDCGNTESEPIVDDDEIFPPYVLRQDDGSPRVTINTAIGHINRYCARLPSDPFTHLAPKCKTREFPDGLYRSTLYLPINSPLRAPIVGPPMNCGRLADRAVALICCKKLHEIGELDDHLMPVGKETVKYEEELDLHDEEETSVPGRPGSTKRRQCYPKAIPECLRNSYPKPGQPCYLYVIGMVLTTPLPDELNFRRRKLYPPEDTTRCFGILTAKPIPQIPHFPVYTRSGEVTISIELKKSGFTLNLEQLELITRLHQYIFSHILRLEKPALEFKPTVADCAYCVLPLNVVNDSGTLDIDFKFVEDIEKSEARTGIPNTQYSAESPFIFKLEDYQDAVIIPRQVIYRNFDQPHRFYVADVYTDLTPLSKFPSPEYETFAEYYKTKYNLDLTNLNQPLLDVDHTSSRLNLLTPRHLNQKGKALPLSSAEKRKAKWESLQNKQILVPELCAIHPVPASLWRKAVCLPSILYRLHCLLTAEELRAQTAIDAGVGVKSLPDDFRYPNLDFGWKRSIDSKTFISNQSSSSVESESDCRLNKTTAPDSAASSAANSVIYMQINDQMSVNCTPPCQKSLSHLQTVCFSDDYKAINGISCNGLTNGDWEAESAACFQKDERITCKQEIPEKSTSFHVQNLPKENQPILKECTLSNSDGNVSKPTSDECPSTCTSDMHYDSGLSNRHSSKTLGPNPGLILQALTLSNASDGFNLERLEMLGDSFLKHAITTYLFCTYPDAHEGRLSYMRSKKVSNCNLYRLGKKKGSPSRMVVSIFDPPVNWLPPGYIVNQDKNSDKWESNETSGEDVMVNGKIDEDFDDEEDEDLMWRNPKEETDFDDDFLEYDQEHIKFIDSMLMGSGAFVKKIPLSSFAPPDQNYEWRAPKKPPLESSQFPCDFDDFDYSSWDAMCYLDPSKAVEEDDFVVGFWNPSEENCGADAGKQSISYDLHTEQCIADKSIADCVEALLGCYLTSCGERAAQLFLCSLGLKVLPEVRKLVTNTNVISASSSYQNSTRDNCTLTARTNTDLSSCKGIDYGYLKIPPRCMFEHPDAEKTLDHLISGFENFEKKINYPFKNKAYLLQAFTHASYHYNTITDCYQRLEFLGDAILDYLITKHLYEDPRQHSPGVLTDLRSALVNNTIFASLAVKYDYHKYFKAISPELFHVIDDFVQFQLEKNEMQGMDSELRRSEEDEEKEEDIEVPKAMGDIFESLAGAIYMDSGMSLETVWHVYYPMMQPLIEKFSANVPRSPVRELLEMEPETAKFSPAERTYDGKVRVTVEVVGKGKFKGVGRSYRIAKSAAARRALRSLKANQSQVPNS.

The Helicase ATP-binding domain occupies 41 to 217 (LLEAALDHNT…DLEEKIQKLE (177 aa)). 54–61 (LNSGSGKT) provides a ligand contact to ATP. The short motif at 165–168 (DECH) is the DECH box element. The interval 400–424 (VSWSDSEDDDDEDEEIEEKEKTETS) is disordered. Acidic residues predominate over residues 404-416 (DSEDDDDEDEEIE). The Helicase C-terminal domain maps to 424–593 (SFPSPFTNIL…SIDCGNTESE (170 aa)). The 93-residue stretch at 621–713 (AIGHINRYCA…MPVGKETVKY (93 aa)) folds into the Dicer dsRNA-binding fold domain. The disordered stretch occupies residues 718 to 737 (DLHDEEETSVPGRPGSTKRR). The region spanning 886-1036 (KFVEDIEKSE…LVPELCAIHP (151 aa)) is the PAZ domain. RNase III domains are found at residues 1249–1380 (TSDM…ETSG) and 1637–1795 (FENF…MDSG). Mg(2+) is bound by residues glutamate 1293, aspartate 1371, glutamate 1374, glutamate 1676, aspartate 1781, and glutamate 1784. In terms of domain architecture, DRBM spans 1820–1885 (VPRSPVRELL…ARRALRSLKA (66 aa)).

This sequence belongs to the helicase family. Dicer subfamily. In terms of assembly, component of the RISC loading complex (RLC), or micro-RNA (miRNA) loading complex (miRLC), which is composed of dicer1, ago2 and tarbp2; dicer1 and tarbp2 are required to process precursor miRNAs (pre-miRNAs) to mature miRNAs and then load them onto ago2. Note that the trimeric RLC/miRLC is also referred to as RISC. It depends on Mg(2+) as a cofactor. Mn(2+) serves as cofactor.

Its subcellular location is the cytoplasm. The enzyme catalyses Endonucleolytic cleavage to 5'-phosphomonoester.. Double-stranded RNA (dsRNA) endoribonuclease playing a central role in short dsRNA-mediated post-transcriptional gene silencing. Cleaves naturally occurring long dsRNAs and short hairpin pre-microRNAs (miRNA) into fragments of twenty-one to twenty-three nucleotides with 3' overhang of two nucleotides, producing respectively short interfering RNAs (siRNA) and mature microRNAs. SiRNAs and miRNAs serve as guide to direct the RNA-induced silencing complex (RISC) to complementary RNAs to degrade them or prevent their translation. Gene silencing mediated by siRNAs, also called RNA interference, controls the elimination of transcripts from mobile and repetitive DNA elements of the genome but also the degradation of exogenous RNA of viral origin for instance. The miRNA pathway on the other side is a mean to specifically regulate the expression of target genes. In Xenopus tropicalis (Western clawed frog), this protein is Endoribonuclease Dicer (dicer1).